A 213-amino-acid chain; its full sequence is MPADSAPMNLTHHFLIAMPGLEDESFARSVVYLCEHSERGALGLIINKPSDLSLKGLFDKVDLSLRREDLSLEPVFRGGPVQTERGFVLHEAMGPSSGKQAAGEGGAQAEGEGAEESAYASTMSIPGGLEMTTSKDVLEALSTGAGPRRVLVTLGYSSWGEGQLESELAENSWLTVGADLSVIFDTPVGQRYDRALALLGLQSWMLSPEAGHA.

The tract at residues 93 to 120 is disordered; the sequence is MGPSSGKQAAGEGGAQAEGEGAEESAYA.

The protein belongs to the UPF0301 (AlgH) family.

The protein is UPF0301 protein Aave_0907 of Paracidovorax citrulli (strain AAC00-1) (Acidovorax citrulli).